A 22-amino-acid chain; its full sequence is Brevinin-2LTa (22 aa).

In terms of tissue distribution, expressed by the skin glands.

Its subcellular location is the secreted. Its function is as follows. Has antibacterial activity. The sequence is that of Brevinin-2LTa from Rana latastei (Italian agile frog).